Here is a 577-residue protein sequence, read N- to C-terminus: Cell adhesion molecule CEACAM20 (577 aa).

An N-terminal signal peptide occupies residues 1-30 (MELAGFHCCSWTVILLSALLPTTWRPPAAA). Residues 31–430 (HFIHRADLLS…LQSSSMSPGA (400 aa)) lie on the Extracellular side of the membrane. Ig-like C2-type domains are found at residues 48-137 (PLAK…ASLT), 142-223 (PDPV…TNLS), 239-324 (PNIE…LKLT), and 329-415 (PDQV…ASVL). A disulfide bond links Cys-72 and Cys-120. Asn-78 and Asn-102 each carry an N-linked (GlcNAc...) asparagine glycan. Intrachain disulfides connect Cys-259–Cys-307 and Cys-358–Cys-399. Residue Asn-289 is glycosylated (N-linked (GlcNAc...) asparagine). Residues 431 to 451 (IAGIVIGILVAIALAIGLGYF) form a helical membrane-spanning segment. Topologically, residues 452-577 (LYSTKDRWTR…SLYCKITPSA (126 aa)) are cytoplasmic. The disordered stretch occupies residues 461–568 (RRRSASDTTS…YEKLLNSNHS (108 aa)). The segment covering 474–484 (IPPTSVMQSTP) has biased composition (polar residues). Over residues 516–526 (DSPEQFYEKKP) the composition is skewed to basic and acidic residues. The span at 536–551 (KPLPQIPKQPLMPPGP) shows a compositional bias: pro residues. Residues Tyr-559 and Tyr-570 each carry the phosphotyrosine modification.

This sequence belongs to the immunoglobulin superfamily. CEA family. In terms of assembly, interacts (via extracellular domain) with PTPRH (via extracellular domain); the interaction dephosphorylates CEACAM20. Interacts (phosphorylated form) with SYK (via SH2 domains); the interaction further enhances CEACAM20 phosphorylation. Phosphorylated on tyrosine residues by SYK, SRC and FYN in vitro. In terms of tissue distribution, strongly expressed in the small intestine and colon (at protein level). Minimal expression in other tissues (at protein level). Highly expressed in cecum, colon, ileum, jejunum, and testis, and also detected at lower levels in salivary gland and thymus.

The protein resides in the cell projection. The protein localises to the microvillus membrane. Its subcellular location is the apical cell membrane. Its function is as follows. Together with the tyrosine-protein kinase SYK, enhances production of the cytokine CXCL8/IL-8 via the NFKB pathway and may thus have a role in the intestinal immune response. In Mus musculus (Mouse), this protein is Cell adhesion molecule CEACAM20.